The primary structure comprises 130 residues: MASVKLASLMVLFATLGMFLTKNVGAASCNGVCSPFEMPPCGSSACRCIPVGLVVGYCRHPSGVFLRTNDEHPNLCESDADCRKKGSGNFCGHYPNPDIEYGWCFASKSEAEDFFSKITQKDLLKSVSTA.

Positions 1 to 26 (MASVKLASLMVLFATLGMFLTKNVGA) are cleaved as a signal peptide. Cystine bridges form between Cys29–Cys46, Cys33–Cys48, and Cys41–Cys58. 2 propeptides span residues 64–69 (VFLRTN) and 123–130 (LLKSVSTA).

The C-terminal glycine may be removed from PA1b. Major component of both the cotyledons and embryonic axes of mature seeds.

Its function is as follows. PA1b binds to basic 7S globulin (BG) and stimulates its phosphorylation activity. Involved in the signal transduction system to regulate the growth and differentiation as a hormone peptide. Toxic to various insects through binding to a high affinity binding site in the insect gut. This Pisum sativum (Garden pea) protein is Albumin-1 B.